The sequence spans 1305 residues: Contactin-associated protein like 5-3 (1305 aa).

The signal sequence occupies residues 1–24 (MDSVPRLNSVFTLVLSGLWHFGLT). The region spanning 25 to 174 (ATNYNCDDPL…IGMRVEVYGC (150 aa)) is the F5/8 type C domain. Residues 25–1235 (ATNYNCDDPL…EPLTNAVPSD (1211 aa)) lie on the Extracellular side of the membrane. Laminin G-like domains lie at 180 to 360 (VADF…TFSC) and 367 to 544 (PITF…IDLC). The N-linked (GlcNAc...) asparagine glycan is linked to Asn-282. Cysteines 329 and 360 form a disulfide. Asn-496 carries an N-linked (GlcNAc...) asparagine glycan. Disulfide bonds link Cys-512-Cys-544, Cys-550-Cys-561, and Cys-555-Cys-570. The EGF-like 1 domain maps to 546 to 583 (IKDRCLPNYCEHGGQCAQTWTNFYCNCSDTGYTGATCH). Asn-571 is a glycosylation site (N-linked (GlcNAc...) asparagine). Cys-572 and Cys-582 form a disulfide bridge. The Fibrinogen C-terminal domain maps to 584 to 790 (DSIYEQSCEV…LRCYGDRHFW (207 aa)). The region spanning 791-956 (NAVSFSTEAS…KVTSGVRPGC (166 aa)) is the Laminin G-like 3 domain. 4 cysteine pairs are disulfide-bonded: Cys-929/Cys-956, Cys-960/Cys-973, Cys-967/Cys-982, and Cys-984/Cys-994. The EGF-like 2 domain maps to 957–995 (PGHCSSYGRNCQNGGKCVEKHIGYSCDCTNSPYEGPFCQ). The 186-residue stretch at 1013–1198 (QEPYSVTKNT…VQRTLTESSC (186 aa)) folds into the Laminin G-like 4 domain. Asn-1023 and Asn-1057 each carry an N-linked (GlcNAc...) asparagine glycan. Cys-1163 and Cys-1198 are disulfide-bonded. A helical transmembrane segment spans residues 1236–1256 (LAVIGGIIAVVTFISFSVIGI). Over 1257 to 1305 (MTHFFYQHKRSHYASQMKEKEYPENVDSSSRNDIDLQNTTRECKQEDFI) the chain is Cytoplasmic.

This sequence belongs to the neurexin family. In terms of tissue distribution, expressed in brain.

It is found in the membrane. Functionally, may play a role in the correct development and proper functioning of the peripheral and central nervous system and be involved in cell adhesion and intercellular communication. The sequence is that of Contactin-associated protein like 5-3 (Cntnap5c) from Mus musculus (Mouse).